Consider the following 916-residue polypeptide: DNA repair endonuclease XPF (916 aa).

Residues 1-457 are helicase-like; sequence MESGQPARRI…EVWMKFRKED (457 aa). Leucine-zipper stretches follow at residues 233-254 and 270-298; these read LNAC…DLSL and LDPL…LQYL. At Lys-289 the chain carries N6-acetyllysine. Residues 460-487 form a disordered region; sequence KRIRKSHKRPKDPQNKERASTKERTLKK. Residues 470 to 483 are compositionally biased toward basic and acidic residues; it reads KDPQNKERASTKER. A Nuclear localization signal motif is present at residues 486–491; that stretch reads KKKKRK. A Glycyl lysine isopeptide (Lys-Gly) (interchain with G-Cter in SUMO2) cross-link involves residue Lys-500. 2 disordered regions span residues 502–526 and 660–679; these read EELE…ESCP and TASA…EQNG. Position 521 is a phosphoserine (Ser-521). A nuclease region spans residues 658-813; sequence RGTASADVST…PSPHATAELF (156 aa). An ERCC4 domain is found at 683-763; the sequence is SIVVDMREFR…RPVLLIEFDP (81 aa). The residue at position 764 (Ser-764) is a Phosphoserine. The interval 837-905 is hhH2, dimerization with ERCC1; it reads TLPESEKYNP…QLYDFIHTSF (69 aa). Lys-911 is modified (N6-acetyllysine).

This sequence belongs to the XPF family. As to quaternary structure, heterodimer composed of ERCC1 and ERCC4/XPF. Interacts with SLX4/BTBD12; this interaction is direct and links the ERCC1-ERCC4/XPF complex to SLX4, which may coordinate the action of the structure-specific endonuclease during DNA repair. Mg(2+) is required as a cofactor. In terms of processing, acetylation at Lys-911 by KAT5 promotes interaction with ERCC1 by disrupting a salt bridge between Glu-907 and Lys-911, thereby exposing a second binding site for ERCC1. Deacetylated by SIRT1.

It is found in the nucleus. Its subcellular location is the chromosome. Its function is as follows. Catalytic component of a structure-specific DNA repair endonuclease responsible for the 5-prime incision during DNA repair, and which is essential for nucleotide excision repair (NER) and interstrand cross-link (ICL) repair. In Homo sapiens (Human), this protein is DNA repair endonuclease XPF.